A 185-amino-acid polypeptide reads, in one-letter code: MTGRLIYLMGPSGSGKDSLLQAAREPLALRGCRIVRRVITRSAEAVGEDAQAVTPAQFDTLERASAFAMSWRANGLCYGIPVQIDEWLAQGYDVLVNGSRGYLAQARRRYPDLLAVLLGVQPEVLRQRLLARGRESPEEIEARLARNAEFAAGLEGPLFQLDNSGELDDTVRALLAWLGGDRACA.

ATP is bound at residue 10-17 (GPSGSGKD).

This sequence belongs to the ribose 1,5-bisphosphokinase family.

The enzyme catalyses alpha-D-ribose 1,5-bisphosphate + ATP = 5-phospho-alpha-D-ribose 1-diphosphate + ADP. It functions in the pathway metabolic intermediate biosynthesis; 5-phospho-alpha-D-ribose 1-diphosphate biosynthesis; 5-phospho-alpha-D-ribose 1-diphosphate from D-ribose 5-phosphate (route II): step 3/3. Its function is as follows. Catalyzes the phosphorylation of ribose 1,5-bisphosphate to 5-phospho-D-ribosyl alpha-1-diphosphate (PRPP). This chain is Ribose 1,5-bisphosphate phosphokinase PhnN, found in Pseudomonas paraeruginosa (strain DSM 24068 / PA7) (Pseudomonas aeruginosa (strain PA7)).